A 177-amino-acid chain; its full sequence is Anti-apoptotic protein NR13 (177 aa).

The short motif at 75 to 94 (LETDGGLNWGRLLALVVFAG) is the BH1 element. The chain crosses the membrane as a helical span at residues 86–106 (LLALVVFAGTLAAALAESACE). The BH2 signature appears at 126-141 (EWMEEHGGWDGFCRFF). The helical transmembrane segment at 156-176 (SNAIMAAAGFGIAGLAFLLVV) threads the bilayer.

Belongs to the Bcl-2 family. In terms of assembly, interacts with BAX. In terms of tissue distribution, mainly expressed in neural and muscular tissues.

It localises to the cell membrane. Its function is as follows. Shows anti-apoptotic properties. Counteract the pro-apoptotic activity of BAX. The polypeptide is Anti-apoptotic protein NR13 (NR13) (Coturnix japonica (Japanese quail)).